We begin with the raw amino-acid sequence, 249 residues long: Probable transcriptional regulatory protein FN1661 (249 aa).

Polar residues predominate over residues 1–10 (MSGHSKWNNI). The disordered stretch occupies residues 1–20 (MSGHSKWNNIQHRKGAQDKK).

This sequence belongs to the TACO1 family.

The protein localises to the cytoplasm. The sequence is that of Probable transcriptional regulatory protein FN1661 from Fusobacterium nucleatum subsp. nucleatum (strain ATCC 25586 / DSM 15643 / BCRC 10681 / CIP 101130 / JCM 8532 / KCTC 2640 / LMG 13131 / VPI 4355).